We begin with the raw amino-acid sequence, 323 residues long: MIKKVNNFLVIILVFLAVILTELIMFMELNSLTLLKCFIFVDLLLVFIPFSLPRMGGKVSSIKNLIDAIKTRIFFFNSCLFFSKIWLYENKITIFWVYTIWNGLNSIFCGIFMEDNYMADIYSISPKNGGGDPAEGNTPSGNPDSTISYDFLAEARDRINTHKSEISTPTEGDKAILFSKDIPTYGQKKIYFQESSGLLSRRGLAPLSVREICDTLLTDKGLPPLNTVGLKSHLNTVDQNIVLYKEQVVKFNNTLRGIDQGNEPFFPDSSKKLFLEYKEILPHMVEINEKMGTNLCKEIKAKDPSFHHPLLTNNDSTSKPKEK.

Helical transmembrane passes span Phe8–Glu28, Leu32–Leu52, and Ile92–Phe112.

Its subcellular location is the mitochondrion membrane. This is an uncharacterized protein from Neurospora crassa (strain ATCC 24698 / 74-OR23-1A / CBS 708.71 / DSM 1257 / FGSC 987).